A 616-amino-acid chain; its full sequence is MLVRLTKLSCPAYQWFHALKIKKCLPLCAPRCSSTSAVPQITTHYTIHPREKDKRWEGVNMERFAEEADVVIVGAGPAGLSAAIRLKQLAAEQEKDIRVCLVEKAAQIGAHTLSGACLDPAAFKELFPDWKEKGAPLNTPVTEDRFAILTEKHRIPVPILPGLPMNNHGNYIVRLGHLVSWMGEQAEALGVEVYPGYAAAEVLYHEDGSVKGIATNDVGIQKDGAPKTTFERGLELHAKVTIFAEGCHGHLAKQFYKKFDLRASCDAQTYGIGLKELWVIDEKKWKPGRVDHTVGWPLDRHTYGGSFLYHLNEGEPLVAVGFVVGLDYQNPYLSPFREFQRWKHHPSIRPTLEGGKRIAYGARALNEGGLQSIPKLTFPGGLLIGCSPGFMNVPKIKGTHTAMKSGSLAAEAIFKQLTSENLQSKTAGLHVTEYEDNLKQSWVWKELHAVRNIRPSCHGILGVYGGMIYTGIFYWILRGMEPWTLKHKGSDSEQLKPAKDCTPIEYPKPDGQISFDLLSSVALSGTNHEHDQPAHLTLKDDSIPVNRNLSIYDGPEQRFCPAGVYEFVPLEQGDGFRLQINAQNCVHCKTCDIKDPSQNINWVVPEGGGGPAYNGM.

A mitochondrion-targeting transit peptide spans 1-32 (MLVRLTKLSCPAYQWFHALKIKKCLPLCAPRC). 70–84 (VVIVGAGPAGLSAAI) is an FAD binding site. N6-acetyllysine is present on lysine 95. The stretch at 108–129 (IGAHTLSGACLDPAAFKELFPD) is an intramembrane region. N6-acetyllysine is present on residues lysine 131 and lysine 222. A ubiquinone is bound by residues glycine 304 and glycine 305. An N6-acetyllysine mark is found at lysine 356 and lysine 415. The stretch at 427–446 (AGLHVTEYEDNLKQSWVWKE) is an intramembrane region. Serine 550 bears the Phosphoserine mark. Positions 560, 585, 588, and 591 each coordinate [4Fe-4S] cluster. In terms of domain architecture, 4Fe-4S ferredoxin-type spans 576-605 (FRLQINAQNCVHCKTCDIKDPSQNINWVVP).

It belongs to the ETF-QO/FixC family. In terms of assembly, monomer. It depends on [4Fe-4S] cluster as a cofactor. FAD serves as cofactor.

The protein resides in the mitochondrion inner membrane. It carries out the reaction a ubiquinone + reduced [electron-transfer flavoprotein] = a ubiquinol + oxidized [electron-transfer flavoprotein] + H(+). In terms of biological role, accepts electrons from ETF and reduces ubiquinone. This is Electron transfer flavoprotein-ubiquinone oxidoreductase, mitochondrial (Etfdh) from Rattus norvegicus (Rat).